Reading from the N-terminus, the 807-residue chain is Protein FAR1-RELATED SEQUENCE 2 (807 aa).

Residues 52 to 138 enclose the FAR1 domain; that stretch reads YFYREYARSV…VKEHNHEICP (87 aa). Residues 219 to 315 form the MULE domain; that stretch reads VVLFDTFYVR…CLWSVLSKIS (97 aa). Residues 499-535 form an SWIM-type zinc finger; sequence FFVALNNELLDACCSCHLFEYQGFLCKHAILVLQSAD. Positions 660–680 form a coiled coil; sequence EDATNRSEELRQETEQVSSRA. Over residues 788–798 the composition is skewed to polar residues; that stretch reads GSSQFQGSDSS. The segment at 788–807 is disordered; that stretch reads GSSQFQGSDSSHPSDHRLSN.

Belongs to the FHY3/FAR1 family. Expressed in hypocotyls, rosette and cauline leaves, inflorescences stems, flowers and siliques.

It is found in the nucleus. Functionally, putative transcription activator involved in regulating light control of development. In Arabidopsis thaliana (Mouse-ear cress), this protein is Protein FAR1-RELATED SEQUENCE 2 (FRS2).